Here is a 357-residue protein sequence, read N- to C-terminus: Protein MGF 360-14L (357 aa).

The protein belongs to the asfivirus MGF 360 family. Interacts with host IRF3 and TRIM21; these interactions mediates degradation of IRF3 through TRIM21 and ubiquitin-meditated proteolysis.

It is found in the host cytoplasm. Its function is as follows. Plays a role in virus cell tropism, and may be required for efficient virus replication in macrophages. Also inhibits the host cGAS/STING-mediated type I interferon production by inducing host IRF3 degradation through the proteasome pathway. The polypeptide is Protein MGF 360-14L (Ornithodoros (relapsing fever ticks)).